Reading from the N-terminus, the 679-residue chain is WD repeat-containing protein 48 homolog (679 aa).

WD repeat units follow at residues glutamine 26–tyrosine 65, histidine 71–threonine 110, threonine 113–alanine 152, glycine 164–lysine 203, glycine 206–threonine 245, valine 248–leucine 287, glutamate 290–leucine 329, and lysine 349–glutamate 388. Residues proline 594–serine 615 form a disordered region.

Belongs to the WD repeat WDR48 family. Catalytic component of the Usp12-46 deubiquitylase complex consisting of Usp12-46, Wdr20 and Uaf1; regulatory subunit that, together wtih Wdr20, stabilizes Usp12-46. The Usp12-46 deubiquitylase complex associates with arr/arrow; the interaction leads to deubiquitination and stabilization of arr/arrow.

Regulatory component of the Usp12-46 deubiquitylase complex. activates deubiquitination by increasing the catalytic turnover without increasing the affinity of deubiquitinating enzymes for the substrate. The complex deubiquitylates the wg/wingless-signaling receptor arr/arrow, which stabilizes the receptor and increases its concentration at the cell surface; this enhances the sensitivity of cells to wg/wingless-signal stimulation. This increases the amplitude and spatial range of the signaling response to the wg/wingless morphogen gradient, facilitating the precise concentration-dependent regulation of its target genes. Together with Wdr20 and Usp12-46 required for wg/wingless-mediated signaling in the wing imaginal disc and for wg/wingless-dependent regulation of intestinal stem cell proliferation. In Drosophila mojavensis (Fruit fly), this protein is WD repeat-containing protein 48 homolog.